An 869-amino-acid polypeptide reads, in one-letter code: H(+)/Cl(-) exchange transporter 6 (869 aa).

Residues 1-80 (MAGCRGSLCC…KKGRRYEAVK (80 aa)) are Cytoplasmic-facing. The next 2 helical transmembrane spans lie at 81-113 (WMVV…FGVV) and 128-150 (LSLL…LVLI). Positions 156–160 (GSGIP) match the Selectivity filter part_1 motif. Ser157 lines the chloride pocket. Positions 159–166 (IPEVKCYL) form an intramembrane region, helical. 2 consecutive transmembrane segments (helical) span residues 176 to 194 (RLRT…VAGG) and 200 to 217 (EGPM…LPQF). The short motif at 198-202 (EKEGP) is the Selectivity filter part_2 element. 2 intramembrane regions (helical) span residues 241–253 (FVSA…VAAA) and 257–265 (PIGGTLFSL). 3 consecutive transmembrane segments (helical) span residues 277-294 (TWKV…LNFF), 335-364 (GFFV…YRMR), and 371-392 (KLVR…VFVA). 3 N-linked (GlcNAc...) asparagine glycosylation sites follow: Asn410, Asn422, and Asn432. Helical transmembrane passes span 462–481 (PVTL…WTYG) and 487–511 (GLFV…KSYI). Residues 487–491 (GLFVP) carry the Selectivity filter part_3 motif. Position 489 (Phe489) interacts with chloride. Residues 519–533 (GTFALIGAAAFLGGV) constitute an intramembrane region (helical). Residues 534–536 (VRM) constitute an intramembrane region (note=Loop between two helices). The helical intramembrane region spans 537 to 548 (TISLTVILIEST). The note=Loop between two helices intramembrane region spans 549 to 552 (NEIT). The chain crosses the membrane as a helical span at residues 553-571 (YGLPIMVTLMVAKWTGDFF). Residues 572–869 (NKGIYDIHVG…ARLRQHYQTI (298 aa)) lie on the Cytoplasmic side of the membrane. Tyr576 is a binding site for chloride. Residues 605–662 (MEPNLTYVYPHTRIQSLVSILRTTVHHAFPVVTENRGNEKEFMKGNQLISNNIKFKKS) form the CBS 1 domain. 630-632 (HHA) is a binding site for ATP. Ser773 is modified (phosphoserine). Residues 807–868 (MNPSPFTVSP…QARLRQHYQT (62 aa)) enclose the CBS 2 domain. 849-852 (TRHN) is an ATP binding site.

The protein belongs to the chloride channel (TC 2.A.49) family. ClC-6/CLCN6 subfamily. N-glycosylated on several asparagine residues. Testis, ovary, small intestine, brain and skeletal muscle. Low level expression in aortic and coronary vascular smooth muscle cells, and aortic endothelial cells. Isoform 3 is only detected in kidney.

It is found in the late endosome membrane. The enzyme catalyses 2 chloride(in) + H(+)(out) = 2 chloride(out) + H(+)(in). In terms of biological role, voltage-gated channel mediating the exchange of chloride ions against protons. Functions as antiporter and contributes to the acidification of the late endosome lumen. The CLC channel family contains both chloride channels and proton-coupled anion transporters that exchange chloride or another anion for protons. The presence of conserved gating glutamate residues is typical for family members that function as antiporters. The chain is H(+)/Cl(-) exchange transporter 6 from Homo sapiens (Human).